The following is a 212-amino-acid chain: Uridine kinase (212 aa).

12-19 provides a ligand contact to ATP; that stretch reads GGSGGGKT.

This sequence belongs to the uridine kinase family.

The protein localises to the cytoplasm. It catalyses the reaction uridine + ATP = UMP + ADP + H(+). The catalysed reaction is cytidine + ATP = CMP + ADP + H(+). The protein operates within pyrimidine metabolism; CTP biosynthesis via salvage pathway; CTP from cytidine: step 1/3. It functions in the pathway pyrimidine metabolism; UMP biosynthesis via salvage pathway; UMP from uridine: step 1/1. The polypeptide is Uridine kinase (Streptococcus pneumoniae serotype 19F (strain G54)).